We begin with the raw amino-acid sequence, 700 residues long: Polyphosphate kinase (700 aa).

Asn-45 contacts ATP. Arg-373 and Arg-403 together coordinate Mg(2+). The 35-residue stretch at 428–462 folds into the PLD phosphodiesterase 1 domain; that stretch reads PGMKIHAKLLLITRREEQGFVRYAHIGTGNFHERT. His-433 (phosphohistidine intermediate) is an active-site residue. ATP-binding residues include Tyr-466, Arg-562, and His-590. A PLD phosphodiesterase 2 domain is found at 585–615; that stretch reads DRFLEHPRVLVVHNDGDPQVFISSADWMERN.

Belongs to the polyphosphate kinase 1 (PPK1) family. Requires Mg(2+) as cofactor. An intermediate of this reaction is the autophosphorylated ppk in which a phosphate is covalently linked to a histidine residue through a N-P bond.

The catalysed reaction is [phosphate](n) + ATP = [phosphate](n+1) + ADP. In terms of biological role, catalyzes the reversible transfer of the terminal phosphate of ATP to form a long-chain polyphosphate (polyP). The protein is Polyphosphate kinase of Vibrio vulnificus (strain CMCP6).